Consider the following 312-residue polypeptide: Zinc finger protein 414 (312 aa).

Positions 1–110 are disordered; sequence MEEKPSGPIP…RRPPPGKQIP (110 aa). Over residues 29–48 the composition is skewed to low complexity; sequence SPAVPAAAPSSSMSEEPGPE. Over residues 84–93 the composition is skewed to polar residues; the sequence is GLTSIVSGTS. 3 C2H2-type zinc fingers span residues 109 to 133, 145 to 169, and 176 to 201; these read IPCSSPGCCLSFPSVRDLAQHLRTH, FRCSALSCTETFPSMQELVAHSKLH, and FKCENCLLRFRTHRSLFKHLHVCAEH. Residues 203-312 form a disordered region; that stretch reads QSPAPPPPPA…GSDAPSGACR (110 aa). The segment covering 213-225 has biased composition (basic and acidic residues); it reads LDREPPAPERPPE. 2 stretches are compositionally biased toward low complexity: residues 227–243 and 265–285; these read DPASAPGLPFPLLEPFT and SPPRLRPFLAAAPGPPASSAA.

It belongs to the krueppel C2H2-type zinc-finger protein family.

The protein localises to the nucleus. May be involved in transcriptional regulation. In Homo sapiens (Human), this protein is Zinc finger protein 414 (ZNF414).